A 241-amino-acid polypeptide reads, in one-letter code: Probable histone-lysine N-methyltransferase set-23 (241 aa).

A Pre-SET domain is found at 25–85 (QGCDCETQCS…SCRNKVVQNG (61 aa)). 9 residues coordinate Zn(2+): Cys27, Cys29, Cys33, Cys39, Cys41, Cys64, Cys68, Cys70, and Cys77. The SET domain maps to 88–210 (KKLKIFSTSE…VGEELSYDYG (123 aa)). S-adenosyl-L-methionine contacts are provided by residues 98–100 (KGD), Asp138, Tyr140, Arg167, and 170–171 (NH). Cys173, Cys222, Cys224, and Cys229 together coordinate Zn(2+). The Post-SET domain maps to 218 to 234 (NRKLCLCRSENCRKYLP).

The protein belongs to the class V-like SAM-binding methyltransferase superfamily. Histone-lysine methyltransferase family. Suvar3-9 subfamily.

Its subcellular location is the nucleus. The protein localises to the chromosome. The catalysed reaction is L-lysyl-[histone] + S-adenosyl-L-methionine = N(6)-methyl-L-lysyl-[histone] + S-adenosyl-L-homocysteine + H(+). In terms of biological role, probable histone methyltransferase required for embryonic development. The sequence is that of Probable histone-lysine N-methyltransferase set-23 from Caenorhabditis briggsae.